Reading from the N-terminus, the 83-residue chain is NAD(P)H-quinone oxidoreductase subunit L (83 aa).

2 consecutive transmembrane segments (helical) span residues 18-38 (ILAY…ALFF) and 53-73 (LLVY…APFL).

The protein belongs to the complex I NdhL subunit family. As to quaternary structure, NDH-1 can be composed of about 15 different subunits; different subcomplexes with different compositions have been identified which probably have different functions.

It is found in the cellular thylakoid membrane. The catalysed reaction is a plastoquinone + NADH + (n+1) H(+)(in) = a plastoquinol + NAD(+) + n H(+)(out). It catalyses the reaction a plastoquinone + NADPH + (n+1) H(+)(in) = a plastoquinol + NADP(+) + n H(+)(out). Its function is as follows. NDH-1 shuttles electrons from an unknown electron donor, via FMN and iron-sulfur (Fe-S) centers, to quinones in the respiratory and/or the photosynthetic chain. The immediate electron acceptor for the enzyme in this species is believed to be plastoquinone. Couples the redox reaction to proton translocation, and thus conserves the redox energy in a proton gradient. Cyanobacterial NDH-1 also plays a role in inorganic carbon-concentration. The chain is NAD(P)H-quinone oxidoreductase subunit L from Parasynechococcus marenigrum (strain WH8102).